The chain runs to 351 residues: Thiamine-phosphate synthase (351 aa).

A unknown region spans residues 1-129 (MVEPYSQQKQ…GQACKQMRYR (129 aa)). The interval 130–351 (VYSLETNLMG…SQLNRIKPES (222 aa)) is thiamine-phosphate synthase. 4-amino-2-methyl-5-(diphosphooxymethyl)pyrimidine-binding positions include 177 to 181 (QYRDK) and asparagine 209. 2 residues coordinate Mg(2+): aspartate 210 and aspartate 229. A 4-amino-2-methyl-5-(diphosphooxymethyl)pyrimidine-binding site is contributed by serine 248. A 2-[(2R,5Z)-2-carboxy-4-methylthiazol-5(2H)-ylidene]ethyl phosphate-binding site is contributed by 274–276 (TPT). 4-amino-2-methyl-5-(diphosphooxymethyl)pyrimidine is bound at residue lysine 277. Position 304 (glycine 304) interacts with 2-[(2R,5Z)-2-carboxy-4-methylthiazol-5(2H)-ylidene]ethyl phosphate.

The protein belongs to the thiamine-phosphate synthase family. It depends on Mg(2+) as a cofactor.

It catalyses the reaction 2-[(2R,5Z)-2-carboxy-4-methylthiazol-5(2H)-ylidene]ethyl phosphate + 4-amino-2-methyl-5-(diphosphooxymethyl)pyrimidine + 2 H(+) = thiamine phosphate + CO2 + diphosphate. It carries out the reaction 2-(2-carboxy-4-methylthiazol-5-yl)ethyl phosphate + 4-amino-2-methyl-5-(diphosphooxymethyl)pyrimidine + 2 H(+) = thiamine phosphate + CO2 + diphosphate. The catalysed reaction is 4-methyl-5-(2-phosphooxyethyl)-thiazole + 4-amino-2-methyl-5-(diphosphooxymethyl)pyrimidine + H(+) = thiamine phosphate + diphosphate. The protein operates within cofactor biosynthesis; thiamine diphosphate biosynthesis; thiamine phosphate from 4-amino-2-methyl-5-diphosphomethylpyrimidine and 4-methyl-5-(2-phosphoethyl)-thiazole: step 1/1. Its function is as follows. Condenses 4-methyl-5-(beta-hydroxyethyl)thiazole monophosphate (THZ-P) and 2-methyl-4-amino-5-hydroxymethyl pyrimidine pyrophosphate (HMP-PP) to form thiamine monophosphate (TMP). The protein is Thiamine-phosphate synthase of Nostoc sp. (strain PCC 7120 / SAG 25.82 / UTEX 2576).